Reading from the N-terminus, the 150-residue chain is Snaclec rhinocetin subunit beta (150 aa).

Positions 1-23 (MGRFIFLSSGLLVVFLSLSGTGA) are cleaved as a signal peptide. 3 disulfide bridges follow: Cys-27-Cys-38, Cys-55-Cys-144, and Cys-121-Cys-136. Residues 34–145 (YEGYCYKVFK…CNRQQYFVCK (112 aa)) enclose the C-type lectin domain.

The protein belongs to the snaclec family. In terms of assembly, heterodimer; disulfide-linked. In terms of tissue distribution, expressed by the venom gland.

The protein resides in the secreted. Antagonist of the alpha-2 subunit of the integrin alpha-2/beta-1 (ITGA2/ITGB1) on human platelets and endothelial cells. This protein inhibits collagen-stimulated activation of human platelets in a dose-dependent manner. In addition, it antagonizes the binding of monoclonal antibodies against the alpha-2 subunit of integrin alpha-2/beta-1 to platelets and it coimmunoprecipitates with this integrin. The protein is Snaclec rhinocetin subunit beta of Bitis rhinoceros (West African gaboon viper).